The sequence spans 36 residues: Glucagon-1 (36 aa).

The protein belongs to the glucagon family.

The protein localises to the secreted. In terms of biological role, promotes hydrolysis of glycogen and lipids, and raises the blood sugar level. The chain is Glucagon-1 (gcg1) from Oreochromis niloticus (Nile tilapia).